Reading from the N-terminus, the 163-residue chain is Nucleotide-binding protein NTHI1194 (163 aa).

Belongs to the YajQ family.

In terms of biological role, nucleotide-binding protein. The polypeptide is Nucleotide-binding protein NTHI1194 (Haemophilus influenzae (strain 86-028NP)).